The sequence spans 355 residues: S-adenosylmethionine:tRNA ribosyltransferase-isomerase (355 aa).

The protein belongs to the QueA family. Monomer.

It localises to the cytoplasm. The catalysed reaction is 7-aminomethyl-7-carbaguanosine(34) in tRNA + S-adenosyl-L-methionine = epoxyqueuosine(34) in tRNA + adenine + L-methionine + 2 H(+). Its pathway is tRNA modification; tRNA-queuosine biosynthesis. Transfers and isomerizes the ribose moiety from AdoMet to the 7-aminomethyl group of 7-deazaguanine (preQ1-tRNA) to give epoxyqueuosine (oQ-tRNA). This is S-adenosylmethionine:tRNA ribosyltransferase-isomerase from Gluconacetobacter diazotrophicus (strain ATCC 49037 / DSM 5601 / CCUG 37298 / CIP 103539 / LMG 7603 / PAl5).